Consider the following 359-residue polypeptide: Cyclic AMP response element-binding protein B (359 aa).

Disordered stretches follow at residues 1–73 (MDNS…AQGG) and 185–238 (VRNK…FTEI). The span at 9–32 (NGNSSAASGSNDVVDVVAQQAAAA) shows a compositional bias: low complexity. A compositionally biased stretch (gly residues) spans 33–47 (VGGGGGGGGGGGGGN). Low complexity predominate over residues 48–70 (PQQQQQNPQSTTAGGPTGATNNA). In terms of domain architecture, KID spans 198-257 (KPEPNTQHPEDSDESLSDDDSQHHRSELTRRPSYNKIFTEISGPDMSGASLPMSDGVLNS). 3 positions are modified to phosphoserine: Ser-209, Ser-212, and Ser-214. A compositionally biased stretch (basic and acidic residues) spans 217-227 (DSQHHRSELTR). The region spanning 300-359 (TRKREIRLQKNREAARECRRKKKEYIKCLENRVAVLENQNKALIEELKSLKELYCQTKND) is the bZIP domain. Residues 301 to 326 (RKREIRLQKNREAARECRRKKKEYIK) are basic motif. The interval 328–349 (LENRVAVLENQNKALIEELKSL) is leucine-zipper.

It belongs to the bZIP family. ATF subfamily. As to quaternary structure, homodimer. In terms of tissue distribution, most cells of the adult brain; cell bodies, but not neuropil.

Its subcellular location is the nucleus. In terms of biological role, isoform E is a PKA-dependent transcriptional activator. Isoform J is a direct antagonist of activation by isoform E in cell culture. Binds the cAMP response element (CRE) (consensus: 5'-GTGACGT[AC][AG]-3'), a sequence present in many viral and cellular promoters. Has a role in long-term memory. This Drosophila melanogaster (Fruit fly) protein is Cyclic AMP response element-binding protein B.